A 294-amino-acid chain; its full sequence is Nucleotide-binding protein CLJ_B3680 (294 aa).

Residue G8–T15 coordinates ATP. Residue D59–G62 participates in GTP binding.

It belongs to the RapZ-like family.

Functionally, displays ATPase and GTPase activities. This chain is Nucleotide-binding protein CLJ_B3680, found in Clostridium botulinum (strain 657 / Type Ba4).